A 122-amino-acid chain; its full sequence is UPF0102 protein CE1920 (122 aa).

It belongs to the UPF0102 family.

The protein is UPF0102 protein CE1920 of Corynebacterium efficiens (strain DSM 44549 / YS-314 / AJ 12310 / JCM 11189 / NBRC 100395).